The primary structure comprises 296 residues: Cell surface glycoprotein CD200 receptor 3 (296 aa).

An N-terminal signal peptide occupies residues 1 to 25 (MHALGRTLALMLLIFITILVPESSC). The Extracellular segment spans residues 26–245 (SVKGREEIPP…NRGTTSILPS (220 aa)). An Ig-like V-type domain is found at 48-162 (PDGVGVTMEI…GIFQERHSIQ (115 aa)). Residues Cys-75 and Cys-146 are joined by a disulfide bond. Residues 151 to 232 (TDGIFQERHS…SHLTDNWILS (82 aa)) enclose the Ig-like C2-type domain. 2 N-linked (GlcNAc...) asparagine glycosylation sites follow: Asn-167 and Asn-199. Cys-172 and Cys-220 are joined by a disulfide. A helical transmembrane segment spans residues 246-266 (LLSILYVKLAVTVLIVGFAFF). Residues 267-296 (QKRNYFSSRDLVFMKERRSKRSVWQREALG) are Cytoplasmic-facing.

Belongs to the CD200R family. In terms of assembly, isoform 3 interacts with TYROBP. Isoform 8 does not interact with TYROBP. Expressed in uterus and bone marrow-derived mast cells (at protein level). Expressed in uterus, spleen, bone marrow-derived dendritic, basophil and mast cells. Expressed in the lung of N.brasiliensis-infected mice. Weakly expressed in brain, testis, lung and thymus.

The protein resides in the membrane. Its function is as follows. According to PubMed:15187158 isoform 4 is a receptor for the CD200 cell surface glycoprotein. According to PubMed:16081818 isoform 4 is not a receptor for the CD200/OX2 cell surface glycoprotein. Isoform 1, isoform 2 and isoform 3 are involved in the recruitment or surface expression of the TYROBP receptor. Isoform 6, isoform 7 and isoform 8 are not involved in the recruitment or surface expression of the TYROBP receptor. The protein is Cell surface glycoprotein CD200 receptor 3 (Cd200r3) of Mus musculus (Mouse).